We begin with the raw amino-acid sequence, 446 residues long: Exodeoxyribonuclease 7 large subunit (446 aa).

Belongs to the XseA family. In terms of assembly, heterooligomer composed of large and small subunits.

The protein resides in the cytoplasm. The catalysed reaction is Exonucleolytic cleavage in either 5'- to 3'- or 3'- to 5'-direction to yield nucleoside 5'-phosphates.. In terms of biological role, bidirectionally degrades single-stranded DNA into large acid-insoluble oligonucleotides, which are then degraded further into small acid-soluble oligonucleotides. The sequence is that of Exodeoxyribonuclease 7 large subunit from Streptococcus equi subsp. zooepidemicus (strain MGCS10565).